The following is a 519-amino-acid chain: 2,3-bisphosphoglycerate-independent phosphoglycerate mutase (519 aa).

Mn(2+) contacts are provided by Asp-18 and Ser-68. Ser-68 functions as the Phosphoserine intermediate in the catalytic mechanism. Substrate-binding positions include His-129, Arg-159–Asp-160, Arg-191, Arg-197, Arg-267–Arg-270, and Lys-341. Asp-408, His-412, Asp-449, His-450, and His-468 together coordinate Mn(2+).

Belongs to the BPG-independent phosphoglycerate mutase family. Monomer. Requires Mn(2+) as cofactor.

It carries out the reaction (2R)-2-phosphoglycerate = (2R)-3-phosphoglycerate. It participates in carbohydrate degradation; glycolysis; pyruvate from D-glyceraldehyde 3-phosphate: step 3/5. Functionally, catalyzes the interconversion of 2-phosphoglycerate and 3-phosphoglycerate. The protein is 2,3-bisphosphoglycerate-independent phosphoglycerate mutase of Coxiella burnetii (strain Dugway 5J108-111).